The following is a 375-amino-acid chain: Period circadian protein (375 aa).

Disordered stretches follow at residues 28–118 (TAPV…AVTP), 140–189 (KHRE…WEGE), and 220–254 (CQAS…NQYA). Low complexity predominate over residues 69-91 (SGNFTTGSNLHMSSVTNTSNAGT). The span at 92–113 (GTSGTGNSGGGGGGGGGGGPGN) shows a compositional bias: gly residues. Basic and acidic residues predominate over residues 145–156 (RGRSGEKNKKSA). The segment covering 224–243 (GAGGGGSGSVGGTGNIGSGG) has biased composition (gly residues). Over residues 245 to 254 (NAQPSTNQYA) the composition is skewed to polar residues.

As to quaternary structure, forms a heterodimer with timeless (TIM); the complex then translocates into the nucleus. Phosphorylated with a circadian rhythmicity, probably by the double-time protein (dbt). Phosphorylation could be implicated in the stability of per monomer and in the formation of heterodimer per-tim.

Its subcellular location is the nucleus. It is found in the cytoplasm. The protein localises to the perinuclear region. Essential for biological clock functions. Determines the period length of circadian and ultradian rhythms; an increase in PER dosage leads to shortened circadian rhythms and a decrease leads to lengthened circadian rhythms. Essential for the circadian rhythmicity of locomotor activity, eclosion behavior, and for the rhythmic component of the male courtship song that originates in the thoracic nervous system. The biological cycle depends on the rhythmic formation and nuclear localization of the TIM-PER complex. Light induces the degradation of TIM, which promotes elimination of PER. Nuclear activity of the heterodimer coordinatively regulates PER and TIM transcription through a negative feedback loop. Behaves as a negative element in circadian transcriptional loop. Does not appear to bind DNA, suggesting indirect transcriptional inhibition. The polypeptide is Period circadian protein (per) (Drosophila capricorni (Fruit fly)).